A 73-amino-acid chain; its full sequence is U3-agatoxin-Ao1k (73 aa).

The first 20 residues, 1–20 (MRTIISLLLLSAMVFAVIEA), serve as a signal peptide directing secretion. Residues 21–34 (ISLEEGLQLFEGER) constitute a propeptide that is removed on maturation. 4 disulfide bridges follow: Cys36–Cys52, Cys43–Cys57, Cys51–Cys67, and Cys59–Cys65. At Ser71 the chain carries Serine amide.

This sequence belongs to the neurotoxin 07 (Beta/delta-agtx) family. 03 (aga-4) subfamily. Aga sub-subfamily. Expressed by the venom gland.

It localises to the secreted. In terms of biological role, insecticidal neurotoxin that modulates the insect Nav channel (DmNaV1/tipE (para/tipE)) in a unique manner, with both the activation and inactivation processes being affected. The voltage dependence of activation is shifted toward more hyperpolarized potentials (analogous to site 4 toxins) and a non-inactivating persistent sodium current is induced (site 3-like action). Interestingly, both effects take place in a voltage-dependent manner, producing a bell-shaped curve between -80 and 0 mV. Compared to beta/delta-agatoxin-1 to -3, this toxin appears to affect the insect sodium channel only weakly. This is U3-agatoxin-Ao1k from Agelena orientalis (Funnel-web spider).